The following is a 381-amino-acid chain: Prokineticin receptor 2 (381 aa).

The Extracellular portion of the chain corresponds to 1–51 (MGPQNRNTSFAPDLNPPQDHVSLNYSYGDYDLPLGEDEDVTKTQTFFAAKI). N7 and N24 each carry an N-linked (GlcNAc...) asparagine glycan. Residues 52-72 (VIGVALAGIMLVCGIGNFVFI) traverse the membrane as a helical segment. Residues 73-86 (AALARYKKLRNLTN) lie on the Cytoplasmic side of the membrane. A helical transmembrane segment spans residues 87–107 (LLIANLAISDFLVAIVCCPFE). Topologically, residues 108-133 (MDYYVVRQLSWAHGHVLCASVNYLRT) are extracellular. Residues C125 and C205 are joined by a disulfide bond. A helical membrane pass occupies residues 134 to 154 (VSLYVSTNALLAIAIDRYLAI). Residues 155 to 168 (VHPLKPRMNYQTAS) lie on the Cytoplasmic side of the membrane. A helical transmembrane segment spans residues 169–189 (FLIALVWMVSILIAVPSAYFT). Over 190–220 (TETILVIVKNQEKIFCGQIWSVDQQLYYKSY) the chain is Extracellular. The helical transmembrane segment at 221–241 (FLFVFGLEFVGPVVTMTLCYA) threads the bilayer. At 242–270 (RISQELWFKAVPGFQTEQIRKRLRCRRKT) the chain is on the cytoplasmic side. A helical membrane pass occupies residues 271–291 (VLLLMGILTAYVLCWAPFYGF). At 292–310 (TIVRDFFPTVVVKEKHYLT) the chain is on the extracellular side. A helical membrane pass occupies residues 311 to 331 (AFYVVECIAMSNSMINTICFV). Residues 332–381 (TVKNNTMKYFKKMLRLHWRPSHYGSKSSADLDLKTSGVPATEEVDCIRLK) lie on the Cytoplasmic side of the membrane.

Belongs to the G-protein coupled receptor 1 family. In terms of assembly, homodimer. As to expression, expressed in several regions of the brain, including paraventricular hypothalamic nucleus, dorsal medial hypothalamic nucleus, paratenial thalamic nuclei, paracentral thalamic nucleus, lateral habenular nucleus, lateral septal nucleus, lateral globus pallidus and amygdala. Highest expression seen in paraventricular thalamic nuclei and is also extensively expressed in the suprachiasmatic nucleus.

The protein localises to the cell membrane. Its function is as follows. Receptor for prokineticin 2. Exclusively coupled to the G(q) subclass of heteromeric G proteins. Activation leads to mobilization of calcium, stimulation of phosphoinositide turnover and activation of p44/p42 mitogen-activated protein kinase. The sequence is that of Prokineticin receptor 2 (Prokr2) from Mus musculus (Mouse).